Reading from the N-terminus, the 632-residue chain is Asparagine synthetase [glutamine-hydrolyzing] 1 (632 aa).

The active-site For GATase activity is the cysteine 2. Residues cysteine 2–aspartate 214 form the Glutamine amidotransferase type-2 domain. L-glutamine is bound by residues arginine 52–isoleucine 56, asparagine 77–glutamate 79, and aspartate 102. ATP-binding positions include valine 288 and serine 361–glycine 362.

Belongs to the asparagine synthetase family.

The enzyme catalyses L-aspartate + L-glutamine + ATP + H2O = L-asparagine + L-glutamate + AMP + diphosphate + H(+). It participates in amino-acid biosynthesis; L-asparagine biosynthesis; L-asparagine from L-aspartate (L-Gln route): step 1/1. Its function is as follows. Main asparagine synthetase in vegetative cells. The sequence is that of Asparagine synthetase [glutamine-hydrolyzing] 1 (asnB) from Bacillus subtilis (strain 168).